A 103-amino-acid polypeptide reads, in one-letter code: Sec-independent protein translocase protein TatA (103 aa).

A helical membrane pass occupies residues 1–21 (MGNIFSPTHLIVILLIIIVLF). Positions 77 to 103 (KRATTRVKGSSSSRKGKTSVVKKQRVK) are disordered. A compositionally biased stretch (basic residues) spans 90 to 103 (RKGKTSVVKKQRVK).

Belongs to the TatA/E family. In terms of assembly, the Tat system comprises two distinct complexes: a TatABC complex, containing multiple copies of TatA, TatB and TatC subunits, and a separate TatA complex, containing only TatA subunits. Substrates initially bind to the TatABC complex, which probably triggers association of the separate TatA complex to form the active translocon.

It localises to the cell inner membrane. In terms of biological role, part of the twin-arginine translocation (Tat) system that transports large folded proteins containing a characteristic twin-arginine motif in their signal peptide across membranes. TatA could form the protein-conducting channel of the Tat system. This Bartonella henselae (strain ATCC 49882 / DSM 28221 / CCUG 30454 / Houston 1) (Rochalimaea henselae) protein is Sec-independent protein translocase protein TatA.